The following is a 605-amino-acid chain: uncharacterized protein (605 aa).

The segment at 111 to 151 is disordered; it reads VNVNDGKPNDIELSSTSKTENDPPLSLHTTPDDLQGNGVNV.

It localises to the golgi apparatus. This is an uncharacterized protein from Schizosaccharomyces pombe (strain 972 / ATCC 24843) (Fission yeast).